A 234-amino-acid polypeptide reads, in one-letter code: Ribonuclease HII (234 aa).

The region spanning 30–221 (GPVAGVDEAG…VRNAAMGSSL (192 aa)) is the RNase H type-2 domain. A divalent metal cation-binding residues include Asp-36, Glu-37, and Asp-130.

It belongs to the RNase HII family. Mn(2+) is required as a cofactor. Requires Mg(2+) as cofactor.

The protein localises to the cytoplasm. It carries out the reaction Endonucleolytic cleavage to 5'-phosphomonoester.. Endonuclease that specifically degrades the RNA of RNA-DNA hybrids. In Mycobacteroides abscessus (strain ATCC 19977 / DSM 44196 / CCUG 20993 / CIP 104536 / JCM 13569 / NCTC 13031 / TMC 1543 / L948) (Mycobacterium abscessus), this protein is Ribonuclease HII.